We begin with the raw amino-acid sequence, 352 residues long: Phenylalanine--tRNA ligase alpha subunit (352 aa).

Glu-258 provides a ligand contact to Mg(2+).

Belongs to the class-II aminoacyl-tRNA synthetase family. Phe-tRNA synthetase alpha subunit type 1 subfamily. In terms of assembly, tetramer of two alpha and two beta subunits. Mg(2+) serves as cofactor.

Its subcellular location is the cytoplasm. It carries out the reaction tRNA(Phe) + L-phenylalanine + ATP = L-phenylalanyl-tRNA(Phe) + AMP + diphosphate + H(+). The sequence is that of Phenylalanine--tRNA ligase alpha subunit from Staphylococcus aureus (strain bovine RF122 / ET3-1).